A 147-amino-acid polypeptide reads, in one-letter code: Hemoglobin subunit gamma-2 (147 aa).

In terms of domain architecture, Globin spans 3–147; it reads HFTEEDKATI…VASALSSRYH (145 aa). T13 is subject to Phosphothreonine. 3 positions are modified to phosphoserine: S45, S51, and S53. Residue K60 is modified to N6-acetyllysine. Residue H64 participates in heme b binding. At K83 the chain carries N6-acetyllysine. H93 provides a ligand contact to heme b. C94 bears the S-nitrosocysteine mark. Phosphoserine is present on residues S140, S143, and S144.

The protein belongs to the globin family. As to quaternary structure, heterotetramer of two alpha chains and two gamma chains in fetal hemoglobin (Hb F). As to expression, red blood cells.

Gamma chains make up the fetal hemoglobin F, in combination with alpha chains. This Gorilla gorilla gorilla (Western lowland gorilla) protein is Hemoglobin subunit gamma-2 (HBG2).